The sequence spans 909 residues: Protein NLP1 (909 aa).

Disordered stretches follow at residues 51–71 (KSLK…DNSP), 536–556 (KEDP…PVPN), 568–605 (ASTP…RAKT), and 690–745 (NSPN…ENTG). Residues 55-70 (QTEQSPSASTAMNDNS) show a composition bias toward polar residues. The RWP-RK domain maps to 595-676 (RRPGEKKRAK…MDSVQGAQGS (82 aa)). A compositionally biased stretch (polar residues) spans 690–716 (NSPNMSSNGPSLKSNEQPSHLNAQTDN). The span at 725-745 (RSPSSSCSKSSGSSNNNENTG) shows a compositional bias: low complexity. The PB1 domain occupies 811–894 (AIKVKATFGE…HTIKISLNEA (84 aa)).

Its subcellular location is the nucleus. Its function is as follows. Probable transcription factor. The chain is Protein NLP1 (NLP1) from Arabidopsis thaliana (Mouse-ear cress).